Consider the following 528-residue polypeptide: Biotin carboxylase 1, chloroplastic (528 aa).

The transit peptide at 1–51 (MEATLPVCKSVTSTPGLFMGKTSGIRSSQCSFMMGNKVNFPRQRAQTAHVH) directs the protein to the chloroplast. ATP is bound by residues Lys179, Lys221, 227 to 228 (GG), 263 to 266 (EKYV), and His271. Residues 183–380 (RETMKKAGVP…LIEEQIRVAM (198 aa)) enclose the ATP-grasp domain. Lys300 contributes to the hydrogencarbonate binding site. Residues Glu338 and Glu351 each coordinate ATP. 3 residues coordinate Mg(2+): Glu338, Glu351, and Asn353. Positions 338, 351, and 353 each coordinate Mn(2+). Residues Arg355, Val358, and Arg401 each coordinate hydrogencarbonate. Residue Arg355 is part of the active site. A biotin-binding site is contributed by Arg401.

As to quaternary structure, acetyl-CoA carboxylase is a heterohexamer composed of biotin carboxyl carrier protein, biotin carboxylase and two subunits each of ACCase subunit alpha and ACCase plastid-coded subunit beta (accD). Mg(2+) is required as a cofactor. It depends on Mn(2+) as a cofactor.

The protein localises to the plastid. It localises to the chloroplast. It carries out the reaction N(6)-biotinyl-L-lysyl-[protein] + hydrogencarbonate + ATP = N(6)-carboxybiotinyl-L-lysyl-[protein] + ADP + phosphate + H(+). The protein operates within lipid metabolism; malonyl-CoA biosynthesis; malonyl-CoA from acetyl-CoA: step 1/1. Its function is as follows. This protein is a component of the acetyl coenzyme A carboxylase complex; first, biotin carboxylase catalyzes the carboxylation of the carrier protein and then the transcarboxylase transfers the carboxyl group to form malonyl-CoA. The chain is Biotin carboxylase 1, chloroplastic from Populus trichocarpa (Western balsam poplar).